The sequence spans 345 residues: S-adenosylmethionine:tRNA ribosyltransferase-isomerase (345 aa).

It belongs to the QueA family. In terms of assembly, monomer.

It is found in the cytoplasm. It catalyses the reaction 7-aminomethyl-7-carbaguanosine(34) in tRNA + S-adenosyl-L-methionine = epoxyqueuosine(34) in tRNA + adenine + L-methionine + 2 H(+). Its pathway is tRNA modification; tRNA-queuosine biosynthesis. In terms of biological role, transfers and isomerizes the ribose moiety from AdoMet to the 7-aminomethyl group of 7-deazaguanine (preQ1-tRNA) to give epoxyqueuosine (oQ-tRNA). This is S-adenosylmethionine:tRNA ribosyltransferase-isomerase from Acinetobacter baumannii (strain ATCC 17978 / DSM 105126 / CIP 53.77 / LMG 1025 / NCDC KC755 / 5377).